The following is a 225-amino-acid chain: Suppressor of cytokine signaling 3 (225 aa).

Residues 22–33 (LKTFSSKSEYQL) form a kinase inhibitory region (KIR) region. Residues 34-45 (VVNAVRKLQESG) form an extended SH2 subdomain (ESS) region. An SH2 domain is found at 46–142 (FYWSAVTGGE…APSFSLPPTE (97 aa)). A disordered region spans residues 141-160 (TEPSFEVQEQPPAQALPGGT). The region spanning 177-224 (VLSRPLSSNVATLQHLCRKTVNGHLDSYEKVTQLPGPIREFLDQYDAP) is the SOCS box domain.

Interacts with multiple activated proteins of the tyrosine kinase signaling pathway including IGF1 receptor, insulin receptor and JAK2. Binding to JAK2 is mediated through the KIR and SH2 domains to a phosphorylated tyrosine residue within the JAK2 JH1 domain. Binds specific activated tyrosine residues of the leptin, EPO, IL12, GSCF and gp130 receptors. Interaction with CSNK1E stabilize SOCS3 protein. Component of the probable ECS(SOCS3) E3 ubiquitin-protein ligase complex which contains CUL5, RNF7/RBX2, Elongin BC complex and SOCS3. Interacts with CUL5, RNF7, ELOB and ELOC. Interacts with FGFR3. Interacts with INSR. Interacts with BCL10; this interaction may interfere with BCL10-binding with PELI2. Interacts with NOD2 (via CARD domain); the interaction promotes NOD2 degradation. Phosphorylated on tyrosine residues after stimulation by the cytokines, IL-2, EPO or IGF1.

It participates in protein modification; protein ubiquitination. In terms of biological role, SOCS family proteins form part of a classical negative feedback system that regulates cytokine signal transduction. SOCS3 is involved in negative regulation of cytokines that signal through the JAK/STAT pathway. Inhibits cytokine signal transduction by binding to tyrosine kinase receptors including IL6ST/gp130, LIF, erythropoietin, insulin, IL12, GCSF and leptin receptors. Binding to JAK2 inhibits its kinase activity and regulates IL6 signaling. Suppresses fetal liver erythropoiesis. Regulates onset and maintenance of allergic responses mediated by T-helper type 2 cells. Probable substrate recognition component of a SCF-like ECS (Elongin BC-CUL2/5-SOCS-box protein) E3 ubiquitin-protein ligase complex which mediates the ubiquitination and subsequent proteasomal degradation of target proteins. The sequence is that of Suppressor of cytokine signaling 3 from Rattus norvegicus (Rat).